The chain runs to 1639 residues: RIMS-binding protein 3A (1639 aa).

3 disordered regions span residues 1–22 (MAKDSPSPLGASPKKPGCSSPA), 215–240 (GSPDPQAVHSLEEPLPQTSSGSCHAP), and 295–364 (SLDS…LTPS). Residues 21–143 (PAAAVLENQR…ELQRQLAEEL (123 aa)) are a coiled coil. Pro residues predominate over residues 326 to 339 (SPPPSPLPPPPPPS). Coiled-coil stretches lie at residues 409-442 (QADEKVKRLKVKRAELTGLARRLADRARKLQETN) and 480-619 (LAKD…AEEN). The interval 697-811 (CRPGHPPEQP…DRDTASEVDD (115 aa)) is disordered. 2 stretches are compositionally biased toward polar residues: residues 707-718 (WETSQMPESQVK) and 761-775 (SVPQVSETVPASQPL). The segment covering 776–790 (SKKTSSQSNSSSEGS) has biased composition (low complexity). An SH3 1 domain is found at 832–899 (PKLKIFMAQY…PSNFVEQIPD (68 aa)). Fibronectin type-III domains follow at residues 995–1083 (APMQ…TLLA) and 1088–1184 (PPLD…IPED). 2 disordered regions span residues 1251–1273 (PRRQSPVSNLGSEGECPSSGAGS) and 1292–1330 (QKSPQNHRPPSVSDQPGEKENCSQHMGTSKSPAPGFIHL). A compositionally biased stretch (polar residues) spans 1293–1305 (KSPQNHRPPSVSD). 2 consecutive SH3 domains span residues 1452–1520 (TPAR…EMEV) and 1569–1636 (WTPK…HMSL).

This sequence belongs to the RIMBP family. As to quaternary structure, interacts with LRGUK (via guanylate kinase-like domain). Interacts (via C-terminus) with HOOK1 (via coiled-coil region).

The protein localises to the cytoplasm. It localises to the cytoskeleton. Functionally, probable component of the manchette, a microtubule-based structure which plays a key role in sperm head morphogenesis during late stages of sperm development. The protein is RIMS-binding protein 3A (RIMBP3) of Homo sapiens (Human).